Reading from the N-terminus, the 166-residue chain is Peroxynitrite isomerase Rv2717c (166 aa).

The GXWXGXG signature appears at 28–34 (GTWRGQG). Heme b-binding residues include threonine 40 and histidine 158.

This sequence belongs to the nitrobindin family. Homodimer. It depends on heme b as a cofactor.

The protein resides in the cytoplasm. It carries out the reaction peroxynitrite = nitrate. It participates in nitrogen metabolism. In terms of biological role, heme-binding protein able to scavenge peroxynitrite and to protect free L-tyrosine against peroxynitrite-mediated nitration, by acting as a peroxynitrite isomerase that converts peroxynitrite to nitrate. Therefore, this protein likely plays a role in peroxynitrite sensing and in the detoxification of reactive nitrogen and oxygen species (RNS and ROS, respectively). Is able to bind nitric oxide (NO) in vitro, but may act as a sensor of peroxynitrite levels in vivo. The protein is Peroxynitrite isomerase Rv2717c of Arabidopsis thaliana (Mouse-ear cress).